A 321-amino-acid polypeptide reads, in one-letter code: L-carnitine dehydrogenase (321 aa).

NAD(+) is bound at residue 14–19 (GSGVIG). The interval 317–321 (MTFSE) is important for catalytic activity.

Belongs to the 3-hydroxyacyl-CoA dehydrogenase family. L-carnitine dehydrogenase subfamily. As to quaternary structure, homodimer.

The protein resides in the cytoplasm. The catalysed reaction is carnitine + NAD(+) = 3-dehydrocarnitine + NADH + H(+). The protein operates within amine and polyamine metabolism; carnitine metabolism. With respect to regulation, the enzyme activity is strongly inhibited by Ag(+), Ni(+), Hg(+), and p-chloromercuribenzoate, and partially inhibited by Li(+), Ca(2+), Mn(2+), Co(2+), Cu(2+), and Zn(2+). Catalyzes the NAD(+)-dependent oxidation of L-carnitine to 3-dehydrocarnitine. Is specific for L-carnitine and NAD(+) as substrates since D-carnitine, other carnitine analogs such as choline and betaine, and NADP(+) are not substrates. Despite a high similarity to 3-hydroxyacyl-CoA dehydrogenases, cannot dehydrogenate 3-hydroxybutylate and 3-hydroxybutyl-CoA. Is probably involved in a L-carnitine degradation pathway that allows Pseudomonas sp. strain NBRC 13558 to grow on L-carnitine as the sole source of carbon and nitrogen. In Pseudomonas sp, this protein is L-carnitine dehydrogenase.